The sequence spans 119 residues: uncharacterized protein (119 aa).

This is an uncharacterized protein from Escherichia coli O157:H7.